The primary structure comprises 270 residues: Proteasome subunit alpha (270 aa).

Residues 229-270 are disordered; sequence LLDTEAAGSTPTDAPSDTEDGDSTDGTDRADGTTDSTEETEK. Over residues 244-253 the composition is skewed to acidic residues; it reads SDTEDGDSTD.

The protein belongs to the peptidase T1A family. The 20S proteasome core is composed of 14 alpha and 14 beta subunits that assemble into four stacked heptameric rings, resulting in a barrel-shaped structure. The two inner rings, each composed of seven catalytic beta subunits, are sandwiched by two outer rings, each composed of seven alpha subunits. The catalytic chamber with the active sites is on the inside of the barrel. Has a gated structure, the ends of the cylinder being occluded by the N-termini of the alpha-subunits. Is capped by the proteasome-associated ATPase, ARC.

The protein localises to the cytoplasm. It participates in protein degradation; proteasomal Pup-dependent pathway. The formation of the proteasomal ATPase ARC-20S proteasome complex, likely via the docking of the C-termini of ARC into the intersubunit pockets in the alpha-rings, may trigger opening of the gate for substrate entry. Interconversion between the open-gate and close-gate conformations leads to a dynamic regulation of the 20S proteasome proteolysis activity. Component of the proteasome core, a large protease complex with broad specificity involved in protein degradation. This chain is Proteasome subunit alpha, found in Streptomyces griseus subsp. griseus (strain JCM 4626 / CBS 651.72 / NBRC 13350 / KCC S-0626 / ISP 5235).